Here is a 490-residue protein sequence, read N- to C-terminus: Transmembrane protease serine 2 (490 aa).

At 1–83 (MALNSGSPPG…ALCTSKSKKS (83 aa)) the chain is on the cytoplasmic side. The chain crosses the membrane as a helical; Signal-anchor for type II membrane protein span at residues 84 to 104 (LCLALALGTVLTGAAVAAVLL). Over 105-490 (WRFWDSNCST…WIYQQMRANS (386 aa)) the chain is Extracellular. The N-linked (GlcNAc...) asparagine glycan is linked to N111. Residues 111–149 (NCSTSEMECGSSGTCISSSLWCDGVAHCPNGEDENRCVR) form the LDL-receptor class A domain. Cystine bridges form between C112/C125, C119/C138, C132/C147, C171/C230, C184/C240, C243/C363, C279/C295, C408/C424, and C435/C463. The Ca(2+) site is built by D133, V135, D143, and E144. One can recognise an SRCR domain in the interval 150–242 (LYGQSFILQV…RMVVSLRCIE (93 aa)). N212 is a glycosylation site (N-linked (GlcNAc...) asparagine). A Peptidase S1 domain is found at 254–487 (IVGGLNASPG…FTDWIYQQMR (234 aa)). Residues H294 and D343 each act as charge relay system in the active site. Catalysis depends on S439, which acts as the Charge relay system. N474 carries an N-linked (GlcNAc...) asparagine glycan.

Belongs to the peptidase S1 family. In terms of assembly, the catalytically active form interacts with ACE2. Proteolytically processed; by an autocatalytic mechanism. Autocleavage induces active conformation. As to expression, larynx, trachea and bronchi, lung, prostate and kidney.

It localises to the cell membrane. The protein localises to the secreted. The catalysed reaction is The enzyme cleaves angiotensin-converting enzyme 2 (EC 3.4.17.23) and cleaves influenzea A and B virus and coronavirus spike glycoproteins at arginine residues.. Plasma membrane-anchored serine protease that cleaves at arginine residues. Participates in proteolytic cascades of relevance for the normal physiologic function of the prostate. Androgen-induced TMPRSS2 activates several substrates that include pro-hepatocyte growth factor/HGF, the protease activated receptor-2/F2RL1 or matriptase/ST14 leading to extracellular matrix disruption. In addition, activates trigeminal neurons and contribute to both spontaneous pain and mechanical allodynia. Functionally, (Microbial infection) Essential for spread and pathogenesis of influenza A virus (strains H1N1, H3N2 and H7N9) and is involved in proteolytic cleavage and activation of hemagglutinin (HA) protein which is essential for viral infectivity. The protein is Transmembrane protease serine 2 (Tmprss2) of Mus musculus (Mouse).